The sequence spans 232 residues: MKAAVSLALLVAVAGAASAHNIFPNLIVDGTVTGDWEFVRTTANKWSREGLTNVNSESMRCYEEAGRPPSEVKTVKAGSRVGFASQAPIRHIGPVLFYMARVPDGQDVDSWTPSGDVWFKIHQQGPERSESGWTWPTQDQTELFVDIPASVPDGNYLLRIEQIALHDAQYVGGAQFYLACGQINVTGGGSGDPGPKVSFPGAYKPTDPGILLDLHGHPPANYQFPGPAVWQG.

The first 19 residues, 1–19, serve as a signal peptide directing secretion; that stretch reads MKAAVSLALLVAVAGAASA. Cu(2+) is bound by residues His-20 and His-91. A disulfide bridge connects residues Cys-61 and Cys-180. Residues His-166 and Gln-175 each contribute to the O2 site. Residue Tyr-177 participates in Cu(2+) binding. Asn-184 carries an N-linked (GlcNAc...) asparagine glycan.

This sequence belongs to the polysaccharide monooxygenase AA9 family. The cofactor is Cu(2+).

The protein localises to the secreted. The enzyme catalyses [(1-&gt;4)-beta-D-glucosyl]n+m + reduced acceptor + O2 = 4-dehydro-beta-D-glucosyl-[(1-&gt;4)-beta-D-glucosyl]n-1 + [(1-&gt;4)-beta-D-glucosyl]m + acceptor + H2O.. In terms of biological role, lytic polysaccharide monooxygenase (LPMO) that depolymerizes crystalline and amorphous polysaccharides via the oxidation of scissile alpha- or beta-(1-4)-glycosidic bonds, yielding C1 or C4 oxidation products. Catalysis by LPMOs requires the reduction of the active-site copper from Cu(II) to Cu(I) by a reducing agent and H(2)O(2) or O(2) as a cosubstrate. In Malbranchea cinnamomea (Thermophilic fungus), this protein is AA9 family lytic polysaccharide monooxygenase C.